Here is a 294-residue protein sequence, read N- to C-terminus: Large ribosomal subunit protein uL18B (294 aa).

It belongs to the universal ribosomal protein uL18 family. In terms of assembly, component of the large ribosomal subunit (LSU). Mature yeast ribosomes consist of a small (40S) and a large (60S) subunit. The 40S small subunit contains 1 molecule of ribosomal RNA (18S rRNA) and 33 different proteins (encoded by 57 genes). The large 60S subunit contains 3 rRNA molecules (25S, 5.8S and 5S rRNA) and 46 different proteins (encoded by 81 genes). Component of a hexameric 5S RNP precursor complex, composed of 5S RNA, rrs1, rpf2, rpl5a/rpl5b, rpl11a/rpl11b and syo1; this complex acts as a precursor for ribosome assembly. rpl5a/rpl5b/uL18 forms a heterotrimeric complex with syo1 and rpl11a/rpl11b/uL5. Interaction of this complex with KAP104 allows the nuclear import of the heterotrimer.

The protein resides in the cytoplasm. It localises to the nucleus. Component of the ribosome, a large ribonucleoprotein complex responsible for the synthesis of proteins in the cell. The small ribosomal subunit (SSU) binds messenger RNAs (mRNAs) and translates the encoded message by selecting cognate aminoacyl-transfer RNA (tRNA) molecules. The large subunit (LSU) contains the ribosomal catalytic site termed the peptidyl transferase center (PTC), which catalyzes the formation of peptide bonds, thereby polymerizing the amino acids delivered by tRNAs into a polypeptide chain. The nascent polypeptides leave the ribosome through a tunnel in the LSU and interact with protein factors that function in enzymatic processing, targeting, and the membrane insertion of nascent chains at the exit of the ribosomal tunnel. This is Large ribosomal subunit protein uL18B (rpl502) from Schizosaccharomyces pombe (strain 972 / ATCC 24843) (Fission yeast).